Consider the following 471-residue polypeptide: Histone deacetylase 6 (471 aa).

At methionine 1 the chain carries N-acetylmethionine. The histone deacetylase stretch occupies residues 20-333 (RVSYFYEPTI…WCYETAVAVG (314 aa)). The active-site Proton donor/acceptor is the histidine 153. Zn(2+) contacts are provided by aspartate 188, histidine 190, and aspartate 276. Positions 389–471 (PSVQFQHTPP…PEPDVNPPSS (83 aa)) are disordered. A compositionally biased stretch (acidic residues) spans 453 to 463 (GEDEMDDDNPE).

Belongs to the histone deacetylase family. HD type 1 subfamily. In terms of assembly, interacts with Coi1, which functions in an SCF complex that recruits regulators for ubiquitination. Interacts with AHL22. Interacts with AS1. Part of the AS1 repressor complex composed of AS1, LBD6/AS2 and HDA6. Binds to EBS and SHL. Interacts with MBD6. Interacts with HDA5. Interacts with FLD. It depends on Zn(2+) as a cofactor. Not detected in leaves, stems, flowers and young siliques.

The protein localises to the nucleus. It localises to the nucleolus. The enzyme catalyses N(6)-acetyl-L-lysyl-[histone] + H2O = L-lysyl-[histone] + acetate. With respect to regulation, inhibited by trichostatin A. Its function is as follows. Responsible for the deacetylation of lysine residues on the N-terminal part of the core histones (H2A, H2B, H3 and H4). Might remove acetyl residues only from specific targets, such as rDNA repeats or complex transgenes. Histone deacetylation gives a tag for epigenetic repression and plays an important role in transcriptional regulation, cell cycle progression and developmental events. Histone deacetylases act via the formation of large multiprotein complexes. Required for rRNA gene silencing in nucleolar dominance. Plays a role in transgene silencing, but this effect seems to bee independent of the histone deacetylase activity. Part of the AS1 repressor complex to regulate the KNOX expression in leaf development. Binds to KNAT1, KNAT2, and KNATM chromatin. Involved in the regulation of flowering time. Forms a histone deacetylase complex with HDA5, FLD and MSI4/FVE that represses FLC gene expression to control flowering time. The sequence is that of Histone deacetylase 6 from Arabidopsis thaliana (Mouse-ear cress).